Here is a 147-residue protein sequence, read N- to C-terminus: Large ribosomal subunit protein uL15 (147 aa).

Residues 1-42 are disordered; the sequence is MTIKVHHLRPAPGAKTTKTRVGRGEGSKGKTAGRGTKGSKAR.

This sequence belongs to the universal ribosomal protein uL15 family. As to quaternary structure, part of the 50S ribosomal subunit.

In terms of biological role, binds to the 23S rRNA. The polypeptide is Large ribosomal subunit protein uL15 (Salinispora tropica (strain ATCC BAA-916 / DSM 44818 / JCM 13857 / NBRC 105044 / CNB-440)).